The sequence spans 460 residues: MANTLFDKIWDAHVVQKVEEGPTQLYIDRLYCHEVTSPQAFAGLRARGVKVFRPDHVYCMPDHNTPTHDQDKPIEDPVSKTQVDTLAKNAKDFGLAHFGMMDKRNGIIHVVGPERGLTLPGMTIVCGDSHTSTHGAMGAVAFGIGTSEVEMVLASQCILQSRPKTMRITIDGELGKGVTAKDMALYMMSKMTTSGATGFFVEYAGSAVRNLSMEGRLTLCNLSIEMGARGGMVAPDEVTFEYIKGREHAPKGVDWDKAVSHWKTLKSDDDAVFDKEIRFDAADIQPMITYGTNPGMGMGITEHIPVDDKSASFKKSLDYMGFQPGESLLGKKIDYVFLGACTNGRIEDFRAFTSLVRGKKKADHVTAWLVPGSWMVDAQIREEGLDKILEEAGFAIRQPGCSACLAMNDDKIPAGKYSVSTSNRNFEGRQGPGARTLLASPLVAAAAAVTGVITDPRELI.

Cys-341, Cys-401, and Cys-404 together coordinate [4Fe-4S] cluster.

This sequence belongs to the aconitase/IPM isomerase family. LeuC type 1 subfamily. Heterodimer of LeuC and LeuD. [4Fe-4S] cluster is required as a cofactor.

It carries out the reaction (2R,3S)-3-isopropylmalate = (2S)-2-isopropylmalate. It functions in the pathway amino-acid biosynthesis; L-leucine biosynthesis; L-leucine from 3-methyl-2-oxobutanoate: step 2/4. Catalyzes the isomerization between 2-isopropylmalate and 3-isopropylmalate, via the formation of 2-isopropylmaleate. The polypeptide is 3-isopropylmalate dehydratase large subunit (Phocaeicola vulgatus (strain ATCC 8482 / DSM 1447 / JCM 5826 / CCUG 4940 / NBRC 14291 / NCTC 11154) (Bacteroides vulgatus)).